A 187-amino-acid polypeptide reads, in one-letter code: Large ribosomal subunit protein uL5 (187 aa).

It belongs to the universal ribosomal protein uL5 family. As to quaternary structure, part of the 50S ribosomal subunit; part of the 5S rRNA/L5/L18/L25 subcomplex. Contacts the 5S rRNA and the P site tRNA. Forms a bridge to the 30S subunit in the 70S ribosome.

Its function is as follows. This is one of the proteins that bind and probably mediate the attachment of the 5S RNA into the large ribosomal subunit, where it forms part of the central protuberance. In the 70S ribosome it contacts protein S13 of the 30S subunit (bridge B1b), connecting the 2 subunits; this bridge is implicated in subunit movement. Contacts the P site tRNA; the 5S rRNA and some of its associated proteins might help stabilize positioning of ribosome-bound tRNAs. This chain is Large ribosomal subunit protein uL5, found in Mycobacterium sp. (strain JLS).